The following is a 591-amino-acid chain: Zinc finger protein 48 (591 aa).

An N-acetylmethionine modification is found at M1. 2 disordered regions span residues 1–24 (MEASPGDEFEHSPQERDGPEIKEE) and 55–80 (GLGKRQPRDPVPRILGEPRWGQGSND). Basic and acidic residues-rich tracts occupy residues 8 to 24 (EFEHSPQERDGPEIKEE) and 55 to 65 (GLGKRQPRDPV). Position 12 is a phosphoserine (S12). K58 participates in a covalent cross-link: Glycyl lysine isopeptide (Lys-Gly) (interchain with G-Cter in SUMO2). C2H2-type zinc fingers lie at residues 83–105 (AVCGECGKSFRQMSDLVKHQRTH) and 111–133 (YKCGVCGKGFGDSSARIKHQRTH). Residues 131-160 (RTHTGEKAYRVRPPAPGPPKMPRSRIPAGE) form a disordered region. K150 is covalently cross-linked (Glycyl lysine isopeptide (Lys-Gly) (interchain with G-Cter in SUMO2)). 2 C2H2-type zinc fingers span residues 163–185 (TICGECGKSFRQSSDLVKHQRTH) and 191–213 (YKCGICGKGFGDSSARIKHQRTH). The tract at residues 206-241 (RIKHQRTHRGDQLPRPVVPRRQPSPAAPAAPHRPKA) is disordered. A compositionally biased stretch (low complexity) spans 224 to 235 (PRRQPSPAAPAA). A Glycyl lysine isopeptide (Lys-Gly) (interchain with G-Cter in SUMO2) cross-link involves residue K240. 2 C2H2-type zinc fingers span residues 246 to 268 (YICTDCGKRFVLSCSLLSHQRSH) and 274 to 296 (FGCDVCGKEFARGSDLVKHLRVH). K300 participates in a covalent cross-link: Glycyl lysine isopeptide (Lys-Gly) (interchain with G-Cter in SUMO2). C2H2-type zinc fingers lie at residues 302 to 324 (YLCPECGKGFADSSARVKHLRTH) and 330 to 352 (HACPECNRSFSLSSTLLRHRLTH). Positions 372–429 (PPPPPLGTSPSLTPRSPSHSSDGPFGLPGLEPEPGGPQAGEPPPPLAGDKPHKCPECG) are disordered. Residues 379–404 (TSPSLTPRSPSHSSDGPFGLPGLEPE) show a composition bias toward low complexity. The C2H2-type 9 zinc finger occupies 423–445 (HKCPECGKGFRRSSDLVKHHRVH). Residue K449 forms a Glycyl lysine isopeptide (Lys-Gly) (interchain with G-Cter in SUMO2) linkage. The C2H2-type 10 zinc finger occupies 451-473 (YLCPECGKGFADSSARVKHLRTH). A disordered region spans residues 464–512 (SARVKHLRTHQGERTRPPPPPSTLLRPHNPPGSVPIVPQSRVQGRPSGP). Pro residues predominate over residues 480-496 (PPPPPSTLLRPHNPPGS). C2H2-type zinc fingers lie at residues 516–538 (HVCGFCGKEFPRSSDLVKHRRTH) and 544–566 (YKCAECGKGFGDSSARIKHQRGH). A disordered region spans residues 564–591 (RGHLALKPFGVGDGPPRPLKEESPAGLE). Basic and acidic residues predominate over residues 581-591 (PLKEESPAGLE). A Glycyl lysine isopeptide (Lys-Gly) (interchain with G-Cter in SUMO2) cross-link involves residue K583.

It belongs to the krueppel C2H2-type zinc-finger protein family.

Its subcellular location is the nucleus. In terms of biological role, may be involved in transcriptional regulation. This is Zinc finger protein 48 (Znf48) from Mus musculus (Mouse).